The following is a 153-amino-acid chain: Large ribosomal subunit protein uL15 (153 aa).

The disordered stretch occupies residues 1–49; it reads MQLHNLYPFPEERKTRRRVGRGSGSGLGCTAGKGHKGQNARAGGGVAPG. Over residues 21–31 the composition is skewed to gly residues; the sequence is RGSGSGLGCTA.

It belongs to the universal ribosomal protein uL15 family. Part of the 50S ribosomal subunit.

Binds to the 23S rRNA. This chain is Large ribosomal subunit protein uL15, found in Desulfovibrio desulfuricans (strain ATCC 27774 / DSM 6949 / MB).